Reading from the N-terminus, the 293-residue chain is Phosphoribosylaminoimidazole-succinocarboxamide synthase (293 aa).

It belongs to the SAICAR synthetase family.

The enzyme catalyses 5-amino-1-(5-phospho-D-ribosyl)imidazole-4-carboxylate + L-aspartate + ATP = (2S)-2-[5-amino-1-(5-phospho-beta-D-ribosyl)imidazole-4-carboxamido]succinate + ADP + phosphate + 2 H(+). Its pathway is purine metabolism; IMP biosynthesis via de novo pathway; 5-amino-1-(5-phospho-D-ribosyl)imidazole-4-carboxamide from 5-amino-1-(5-phospho-D-ribosyl)imidazole-4-carboxylate: step 1/2. This Bordetella petrii (strain ATCC BAA-461 / DSM 12804 / CCUG 43448) protein is Phosphoribosylaminoimidazole-succinocarboxamide synthase.